The primary structure comprises 304 residues: Light-independent protochlorophyllide reductase iron-sulfur ATP-binding protein (304 aa).

Residues 46–51 (GIGKST) and Lys-75 contribute to the ATP site. Ser-50 contributes to the Mg(2+) binding site. The [4Fe-4S] cluster site is built by Cys-131 and Cys-165. ATP contacts are provided by residues 216 to 217 (NR) and 240 to 242 (PDL).

This sequence belongs to the NifH/BchL/ChlL family. As to quaternary structure, homodimer. Protochlorophyllide reductase is composed of three subunits; BchL, BchN and BchB. [4Fe-4S] cluster is required as a cofactor.

The enzyme catalyses chlorophyllide a + oxidized 2[4Fe-4S]-[ferredoxin] + 2 ADP + 2 phosphate = protochlorophyllide a + reduced 2[4Fe-4S]-[ferredoxin] + 2 ATP + 2 H2O. It participates in porphyrin-containing compound metabolism; bacteriochlorophyll biosynthesis (light-independent). Functionally, component of the dark-operative protochlorophyllide reductase (DPOR) that uses Mg-ATP and reduced ferredoxin to reduce ring D of protochlorophyllide (Pchlide) to form chlorophyllide a (Chlide). This reaction is light-independent. The L component serves as a unique electron donor to the NB-component of the complex, and binds Mg-ATP. The polypeptide is Light-independent protochlorophyllide reductase iron-sulfur ATP-binding protein (Rhodobacter capsulatus (strain ATCC BAA-309 / NBRC 16581 / SB1003)).